We begin with the raw amino-acid sequence, 544 residues long: Protein RDR1 (544 aa).

Positions 14–40 form a DNA-binding region, zn(2)-C6 fungal-type; it reads CETCRELKRKCDGNQPCGACVRFEYDC. Residues 50 to 71 are disordered; the sequence is KRRKTVEQDKEAPLPSPPVHVD.

The protein resides in the nucleus. Functionally, may act as a transcriptional repressor of multidrug resistance genes. The protein is Protein RDR1 (RDR1) of Gibberella zeae (strain ATCC MYA-4620 / CBS 123657 / FGSC 9075 / NRRL 31084 / PH-1) (Wheat head blight fungus).